Here is a 200-residue protein sequence, read N- to C-terminus: Eukaryotic translation initiation factor isoform 4E (200 aa).

Residues 44 to 49, Lys-76, and 94 to 95 each bind mRNA; these read QGVAWG and WE. The cysteines at positions 99 and 138 are disulfide-linked. Residues 145 to 150 and 189 to 192 contribute to the mRNA site; these read RRSQDK and KRER.

Belongs to the eukaryotic initiation factor 4E family. In terms of assembly, EIF4F is a multi-subunit complex, the composition of which varies with external and internal environmental conditions. It is composed of at least EIF4A, EIF4E and EIF4G. EIF4E is also known to interact with other partners. In higher plants two isoforms of EIF4F have been identified, named isoform EIF4F and isoform EIF(iso)4F. Isoform EIF4F has subunits p220 and p26, whereas isoform EIF(iso)4F has subunits p82 and p28. (Microbial infection) Interacts with viral genome-linked protein (VPg); this interaction is possible in susceptible hosts but impaired in resistant plants. According to the redox status, the Cys-99-Cys-138 disulfide bridge may have a role in regulating protein function by affecting its ability to bind capped mRNA. Mostly expressed in roots and leaves, and, to a lower extent, in stems, flowers and immature green fruits.

The protein localises to the cytoplasm. The protein resides in the nucleus. Its function is as follows. Component of the protein complex eIF4F, which is involved in the recognition of the mRNA cap, ATP-dependent unwinding of 5'-terminal secondary structure and recruitment of mRNA to the ribosome. Recognizes and binds the 7-methylguanosine-containing mRNA cap during an early step in the initiation of protein synthesis and facilitates ribosome binding by inducing the unwinding of the mRNAs secondary structures. Key component of recessive resistance to potyviruses. (Microbial infection) Susceptibility host factor required for viral infection by recruiting viral RNAs to the host ribosomal complex via an interaction with viral genome-linked protein (VPg). In Solanum lycopersicum (Tomato), this protein is Eukaryotic translation initiation factor isoform 4E.